Consider the following 380-residue polypeptide: GPI-anchor transamidase (380 aa).

An N-terminal signal peptide occupies residues 1–19 (MIVQFVALLLLNLLQIIAA). Topologically, residues 20-354 (ESSHTNNWAV…TRELKYKKHP (335 aa)) are lumenal. Active-site residues include H145 and C187. N-linked (GlcNAc...) asparagine glycosylation occurs at N307. Residues 355-375 (ISRIISAVVCISFSIGFPYYA) form a helical membrane-spanning segment. Over 376–380 (SKYLK) the chain is Cytoplasmic.

Belongs to the peptidase C13 family. As to quaternary structure, forms a complex with PIG-T homolog, PIG-U homolog and PIG-S homolog. Post-translationally, the disulfide bond between PIGK/GPI8 and PIGT is important for normal enzyme activity.

It localises to the endoplasmic reticulum membrane. The protein operates within glycolipid biosynthesis; glycosylphosphatidylinositol-anchor biosynthesis. Functionally, mediates GPI anchoring in the endoplasmic reticulum, by replacing a protein's C-terminal GPI attachment signal peptide with a pre-assembled GPI. During this transamidation reaction, the GPI transamidase forms a carbonyl intermediate with the substrate protein. In Schizosaccharomyces pombe (strain 972 / ATCC 24843) (Fission yeast), this protein is GPI-anchor transamidase (gpi8).